Here is a 53-residue protein sequence, read N- to C-terminus: uncharacterized protein (53 aa).

A disordered region spans residues 34 to 53; that stretch reads RKEKGKRHAAPLSLMGVHKR.

This is an uncharacterized protein from Treponema pallidum (strain Nichols).